Reading from the N-terminus, the 920-residue chain is Whirlin (920 aa).

Residues 141–224 (LVSLRRAKAH…LVLSVYSAGR (84 aa)) form the PDZ 1 domain. The tract at residues 241 to 262 (QGRSTSPPSSLPHGSTLRQHED) is disordered. The span at 242–257 (GRSTSPPSSLPHGSTL) shows a compositional bias: polar residues. Positions 278–360 (KVNLVLGDGR…LILTVKDVGR (83 aa)) constitute a PDZ 2 domain. Disordered stretches follow at residues 502 to 536 (MKAR…TSTT), 561 to 603 (CETT…QGHD), 630 to 730 (FSAP…AMGA), and 752 to 828 (RALP…PTST). The segment covering 520-536 (SYSDTGSSTGSHGTSTT) has biased composition (low complexity). A compositionally biased stretch (polar residues) spans 561–570 (CETTQGSTNA). Pro residues-rich tracts occupy residues 589–598 (IKPPPPPPPL) and 636–651 (RSPP…PTPG). The span at 655-674 (ARDSPSSPIYASISHANPSS) shows a compositional bias: polar residues. Ser-698 bears the Phosphoserine mark. 2 stretches are compositionally biased toward polar residues: residues 756 to 775 (QTRT…TLSE) and 785 to 800 (EAST…NTKN). Positions 802–813 (NGKELPQTERTT) are enriched in basic and acidic residues. Residues 829 to 912 (LIRVRKSAAT…TKERDYIDFL (84 aa)) form the PDZ 3 domain.

Forms homooligomers. Interacts (via C-terminal PDZ domain) with MYO15A; this interaction is necessary for localization of WHRN to stereocilia tips. Interacts (via C-terminal PDZ domain) with MPP1/p55. Interacts with LRRC4C/NGL1. Interacts with MYO7A. Interacts with RPGR. Interacts with EPS8. Interacts with CASK. Interacts with CIB2. Component of USH2 complex, composed of ADGRV1, PDZD7, USH2A and WHRN. Interacts (via PDZ domains) with PDZD7; the interaction is direct. Interacts (via N-terminal PDZ domain) with USH2A (via cytoplasmic region). Interacts with ADGRV1/MASS1 (via cytoplasmic region). As to expression, ubiquitous. Highly expressed in heart, spleen, lung and liver. Highly expressed in brain, in the olfactory bulb, thalamus, layers III-V of the cerebral cortex and the molecular layer of cerebellum. Detected in soma and dendrites of thalamic neurons, and in cerebrum in cell bodies and apical dendrites of pyramidal neurons. Expressed in retina and inner ear.

The protein resides in the cytoplasm. The protein localises to the cell projection. Its subcellular location is the stereocilium. It is found in the growth cone. It localises to the synapse. Functionally, involved in hearing and vision as member of the USH2 complex. Necessary for elongation and maintenance of inner and outer hair cell stereocilia in the organ of Corti in the inner ear. Involved in the maintenance of the hair bundle ankle region, which connects stereocilia in cochlear hair cells of the inner ear. In retina photoreceptors, required for the maintenance of periciliary membrane complex that seems to play a role in regulating intracellular protein transport. The chain is Whirlin from Rattus norvegicus (Rat).